The primary structure comprises 270 residues: Acyl-[acyl-carrier-protein]--UDP-N-acetylglucosamine O-acyltransferase (270 aa).

It belongs to the transferase hexapeptide repeat family. LpxA subfamily. Homotrimer.

The protein resides in the cytoplasm. It carries out the reaction a (3R)-hydroxyacyl-[ACP] + UDP-N-acetyl-alpha-D-glucosamine = a UDP-3-O-[(3R)-3-hydroxyacyl]-N-acetyl-alpha-D-glucosamine + holo-[ACP]. Its pathway is glycolipid biosynthesis; lipid IV(A) biosynthesis; lipid IV(A) from (3R)-3-hydroxytetradecanoyl-[acyl-carrier-protein] and UDP-N-acetyl-alpha-D-glucosamine: step 1/6. Its function is as follows. Involved in the biosynthesis of lipid A, a phosphorylated glycolipid that anchors the lipopolysaccharide to the outer membrane of the cell. In Helicobacter pylori (strain J99 / ATCC 700824) (Campylobacter pylori J99), this protein is Acyl-[acyl-carrier-protein]--UDP-N-acetylglucosamine O-acyltransferase.